The chain runs to 848 residues: Aryl hydrocarbon receptor (848 aa).

An N-acetylmethionine modification is found at M1. Residues 1–10 (MNSSSANITY) constitute a propeptide that is removed on maturation. Polar residues predominate over residues 1-10 (MNSSSANITY). The tract at residues 1 to 39 (MNSSSANITYASRKRRKPVQKTVKPIPAEGIKSNPSKRH) is disordered. Short sequence motifs (nuclear localization signal) lie at residues 13–16 (RKRR) and 37–42 (KRHRDR). Residues 27–80 (PAEGIKSNPSKRHRDRLNTELDRLASLLPFPQDVINKLDKLSVLRLSVSYLRAK) form the bHLH domain. A DNA-binding region spans residues 38–66 (RHRDRLNTELDRLASLLPFPQDVINKLDK). Required for maintaining the overall integrity of the AHR:ARNT heterodimer and its transcriptional activity stretches follow at residues 50 to 82 (LASL…AKSF), 118 to 126 (LLQALNGFV), and 266 to 268 (FAI). A Nuclear export signal motif is present at residues 64–72 (LDKLSVLRL). The region spanning 111–181 (NLQEGEFLLQ…RQLHWALNPS (71 aa)) is the PAS 1 domain. The PAS 2 domain occupies 275-342 (PSILEIRTKN…CAESHIRMIK (68 aa)). In terms of domain architecture, PAC spans 348 to 386 (MIVFRLLTKNNRWTWVQSNARLLYKNGRPDYIIVTQRPL). The disordered stretch occupies residues 824-848 (TTHLQPLHHPSEARPFPDLTSSGFL).

Homodimer. Heterodimer; efficient DNA binding requires dimerization with another bHLH protein. Interacts with ARNT; the heterodimer ARNT:AHR binds to core DNA sequence 5'-TGCGTG-3' within the dioxin response element (DRE) of target gene promoters and activates their transcription. Binds MYBBP1A. Interacts with coactivators including SRC-1, RIP140 and NOCA7, and with the corepressor SMRT. Interacts with NEDD8 and IVNS1ABP. Interacts with BMAL1. Interacts with HSP90AB1. Interacts with TIPARP; leading to mono-ADP-ribosylation of AHR and subsequent inhibition of AHR. Post-translationally, mono-ADP-ribosylated, leading to inhibit transcription activator activity of AHR. In terms of tissue distribution, expressed in all tissues tested including blood, brain, heart, kidney, liver, lung, pancreas and skeletal muscle. Expressed in retinal photoreceptors.

The protein localises to the cytoplasm. It is found in the nucleus. Functionally, ligand-activated transcription factor that enables cells to adapt to changing conditions by sensing compounds from the environment, diet, microbiome and cellular metabolism, and which plays important roles in development, immunity and cancer. Upon ligand binding, translocates into the nucleus, where it heterodimerizes with ARNT and induces transcription by binding to xenobiotic response elements (XRE). Regulates a variety of biological processes, including angiogenesis, hematopoiesis, drug and lipid metabolism, cell motility and immune modulation. Xenobiotics can act as ligands: upon xenobiotic-binding, activates the expression of multiple phase I and II xenobiotic chemical metabolizing enzyme genes (such as the CYP1A1 gene). Mediates biochemical and toxic effects of halogenated aromatic hydrocarbons. Next to xenobiotics, natural ligands derived from plants, microbiota, and endogenous metabolism are potent AHR agonists. Tryptophan (Trp) derivatives constitute an important class of endogenous AHR ligands. Acts as a negative regulator of anti-tumor immunity: indoles and kynurenic acid generated by Trp catabolism act as ligand and activate AHR, thereby promoting AHR-driven cancer cell motility and suppressing adaptive immunity. Regulates the circadian clock by inhibiting the basal and circadian expression of the core circadian component PER1. Inhibits PER1 by repressing the CLOCK-BMAL1 heterodimer mediated transcriptional activation of PER1. The heterodimer ARNT:AHR binds to core DNA sequence 5'-TGCGTG-3' within the dioxin response element (DRE) of target gene promoters and activates their transcription. The sequence is that of Aryl hydrocarbon receptor from Homo sapiens (Human).